Reading from the N-terminus, the 323-residue chain is Digestive cysteine proteinase 2 (323 aa).

Residues 1–16 form the signal peptide; that stretch reads MKVAVLFLCGVALAAA. A propeptide spans 17–107 (activation peptide); that stretch reads SPSWEHFKGK…FYPKKETGPQ (91 aa). 3 disulfides stabilise this stretch: Cys-128-Cys-171, Cys-162-Cys-204, and Cys-263-Cys-312. The active site involves Cys-131. Catalysis depends on residues His-270 and Asn-290.

Belongs to the peptidase C1 family.

With respect to regulation, inhibited by E-64, antipain, leupeptin, heavy metal ions, iodoacetic acid, dithionitrobenzene, p-hydroxymercuri-benzoate; activated by mercaptoethanol and dithiothreitol. This Homarus americanus (American lobster) protein is Digestive cysteine proteinase 2 (LCP2).